The following is a 1887-amino-acid chain: Protein TIC 214 (1887 aa).

6 consecutive transmembrane segments (helical) span residues 18 to 38 (IINS…FSIG), 64 to 84 (FITG…HLAL), 87 to 107 (PHTI…WNNH), 124 to 144 (LSIQ…HFIL), 172 to 192 (VGWL…LVWI), and 221 to 241 (IFSI…PSPI). Disordered regions lie at residues 248–300 (EASK…EGWD), 786–805 (EEQT…DNKR), and 1569–1603 (LPSN…NLSP). The span at 256–268 (VESEEERDVEIET) shows a compositional bias: acidic residues. The stretch at 775 to 816 (KEREFKILESREEQTKREEKKEKDKKEDNKRKEQARIAIEEA) forms a coiled coil. Residues 1578–1597 (RSQETKEPPSQRERGSDIEN) are compositionally biased toward basic and acidic residues.

This sequence belongs to the TIC214 family. In terms of assembly, part of the Tic complex.

The protein resides in the plastid. The protein localises to the chloroplast inner membrane. Functionally, involved in protein precursor import into chloroplasts. May be part of an intermediate translocation complex acting as a protein-conducting channel at the inner envelope. This chain is Protein TIC 214, found in Solanum bulbocastanum (Wild potato).